The following is a 158-amino-acid chain: C-type lectin BiL (158 aa).

An N-terminal signal peptide occupies residues 1 to 23 (MGRFIFVSFGLLVVFLSLSGAKG). 4 disulfide bridges follow: Cys-26-Cys-37, Cys-54-Cys-154, Cys-61-Cys-156, and Cys-129-Cys-146. The C-type lectin domain maps to 33–155 (MNGLCYKIFD…CESKNAFLCQ (123 aa)). Residues Gln-119, Asp-121, Glu-127, Asn-142, and Asp-143 each contribute to the Ca(2+) site. The Galactose-binding signature appears at 119 to 121 (QPD).

As to quaternary structure, homodimer; disulfide-linked. Expressed by the venom gland.

The protein resides in the secreted. Its function is as follows. Lectin with a hemagglutinating activity that is inhibited by galactose, lactose and EDTA. Is calcium-dependent. Shows effects on the renal function of isolated perfused rat kidneys by increasing both perfusion pressure (PP) and renal vascular resistance (RVR). In addition, the urinary flow and glomerular filtration rate (GFR) decreases significantly. The changes observed may reflect direct injury to the glomerular and tubular renal cells, and the rise in permeability in the glomerular endothelial cells, may be the effect of interactions of C-type lectin with endothelial cells or due to release of other mediators by mesangial, tubular and endothelial cells. This is C-type lectin BiL from Bothrops insularis (Golden lancehead).